Reading from the N-terminus, the 399-residue chain is CCA-adding enzyme (399 aa).

ATP-binding residues include G32 and R35. CTP contacts are provided by G32 and R35. Mg(2+) contacts are provided by D45 and D47. 5 residues coordinate ATP: R116, D159, R162, R165, and R168. 5 residues coordinate CTP: R116, D159, R162, R165, and R168.

Belongs to the tRNA nucleotidyltransferase/poly(A) polymerase family. Bacterial CCA-adding enzyme type 3 subfamily. Homodimer. It depends on Mg(2+) as a cofactor.

The enzyme catalyses a tRNA precursor + 2 CTP + ATP = a tRNA with a 3' CCA end + 3 diphosphate. It carries out the reaction a tRNA with a 3' CCA end + 2 CTP + ATP = a tRNA with a 3' CCACCA end + 3 diphosphate. Its function is as follows. Catalyzes the addition and repair of the essential 3'-terminal CCA sequence in tRNAs without using a nucleic acid template. Adds these three nucleotides in the order of C, C, and A to the tRNA nucleotide-73, using CTP and ATP as substrates and producing inorganic pyrophosphate. tRNA 3'-terminal CCA addition is required both for tRNA processing and repair. Also involved in tRNA surveillance by mediating tandem CCA addition to generate a CCACCA at the 3' terminus of unstable tRNAs. While stable tRNAs receive only 3'-terminal CCA, unstable tRNAs are marked with CCACCA and rapidly degraded. The sequence is that of CCA-adding enzyme from Streptococcus gordonii (strain Challis / ATCC 35105 / BCRC 15272 / CH1 / DL1 / V288).